The sequence spans 320 residues: Lipoyl synthase (320 aa).

[4Fe-4S] cluster contacts are provided by C67, C72, C78, C93, C97, C100, and S307. In terms of domain architecture, Radical SAM core spans 79–296 (FNHGTATFMI…RDKAEKMGFE (218 aa)).

The protein belongs to the radical SAM superfamily. Lipoyl synthase family. [4Fe-4S] cluster serves as cofactor.

The protein localises to the cytoplasm. The enzyme catalyses [[Fe-S] cluster scaffold protein carrying a second [4Fe-4S](2+) cluster] + N(6)-octanoyl-L-lysyl-[protein] + 2 oxidized [2Fe-2S]-[ferredoxin] + 2 S-adenosyl-L-methionine + 4 H(+) = [[Fe-S] cluster scaffold protein] + N(6)-[(R)-dihydrolipoyl]-L-lysyl-[protein] + 4 Fe(3+) + 2 hydrogen sulfide + 2 5'-deoxyadenosine + 2 L-methionine + 2 reduced [2Fe-2S]-[ferredoxin]. It functions in the pathway protein modification; protein lipoylation via endogenous pathway; protein N(6)-(lipoyl)lysine from octanoyl-[acyl-carrier-protein]: step 2/2. Its function is as follows. Catalyzes the radical-mediated insertion of two sulfur atoms into the C-6 and C-8 positions of the octanoyl moiety bound to the lipoyl domains of lipoate-dependent enzymes, thereby converting the octanoylated domains into lipoylated derivatives. The protein is Lipoyl synthase of Histophilus somni (strain 129Pt) (Haemophilus somnus).